The following is a 1035-amino-acid chain: Electrogenic sodium bicarbonate cotransporter 1 (1035 aa).

At M1 to S421 the chain is on the cytoplasmic side. Residues S192 to D217 are compositionally biased toward polar residues. 2 disordered regions span residues S192–P222 and I348–E389. Residues A376–E389 show a composition bias toward basic and acidic residues. The chain crosses the membrane as a helical span at residues I422–L446. Over G447 to V456 the chain is Extracellular. The helical transmembrane segment at L457–G475 threads the bilayer. Position 476 (Q476) is a topological domain, cytoplasmic. Residues P477–F497 form a discontinuously helical membrane-spanning segment. At S498–Y505 the chain is on the extracellular side. Residues L506–T526 form a helical membrane-spanning segment. Residues D527–E540 are Cytoplasmic-facing. Residues E541–D564 traverse the membrane as a helical segment. At Y565–I648 the chain is on the extracellular side. N591, N596, N609, and N617 each carry an N-linked (GlcNAc...) asparagine glycan. Residues T649–L666 form a helical membrane-spanning segment. Topologically, residues K667–K681 are cytoplasmic. Residues L682–L701 form a helical membrane-spanning segment. Topologically, residues L702–W735 are extracellular. The helical transmembrane segment at V736–N763 threads the bilayer. Residues R764 to Y775 lie on the Cytoplasmic side of the membrane. The chain crosses the membrane as a helical span at residues H776–M792. Residue A793 is a topological domain, extracellular. The chain crosses the membrane as a discontinuously helical span at residues L794–L811. The Cytoplasmic portion of the chain corresponds to K812–R833. The helical transmembrane segment at V834–A850 threads the bilayer. The Extracellular segment spans residues P851–P857. A helical membrane pass occupies residues M858–N874. The Cytoplasmic segment spans residues G875–C916. The discontinuously helical intramembrane region spans L917–V942. The Cytoplasmic portion of the chain corresponds to R943–C1035. Residues K968 to C1035 are disordered. Over residues I1007–C1035 the composition is skewed to basic and acidic residues.

The protein belongs to the anion exchanger (TC 2.A.31) family. As to quaternary structure, homodimer. Expressed in kidney and to a lower extent in bladder, brain, intestine, large intestine and eye.

The protein localises to the basolateral cell membrane. The protein resides in the cell membrane. The catalysed reaction is 2 hydrogencarbonate(out) + Na(+)(out) = 2 hydrogencarbonate(in) + Na(+)(in). It carries out the reaction 3 hydrogencarbonate(out) + Na(+)(out) = 3 hydrogencarbonate(in) + Na(+)(in). Its function is as follows. Electrogenic sodium/bicarbonate cotransporter with a Na(+):HCO3(-) stoichiometry varying from 1:2 to 1:3. May regulate bicarbonate influx/efflux at the basolateral membrane of cells and regulate intracellular pH. In Ambystoma tigrinum (Eastern tiger salamander), this protein is Electrogenic sodium bicarbonate cotransporter 1 (SLC4A4).